The following is an 864-amino-acid chain: Leucine--tRNA ligase (864 aa).

Residues 42–52 carry the 'HIGH' region motif; sequence PYPSGKLHMGH. Residues 624–628 carry the 'KMSKS' region motif; it reads KMSKS. Residue Lys627 coordinates ATP.

It belongs to the class-I aminoacyl-tRNA synthetase family.

It is found in the cytoplasm. The catalysed reaction is tRNA(Leu) + L-leucine + ATP = L-leucyl-tRNA(Leu) + AMP + diphosphate. This Burkholderia thailandensis (strain ATCC 700388 / DSM 13276 / CCUG 48851 / CIP 106301 / E264) protein is Leucine--tRNA ligase.